Consider the following 265-residue polypeptide: MTDSALDRTLVARHLRFQTNGRYLTDDVSLELNCGEIVAIIGPNGAGKSTLLRLLTGYLTPDDGECLLAGQPFSHWQPSALAKTRAVMRQHSGMAFAFSVQDVVAMGRSPHGRYPKNDDVVQQVMAQTGCLELATRDYRHLSGGEQQRVQLARVLAQLWHPEPTPGWLFLDEPTSALDLYHQQHLLRLLKQLTREQPLAVCCVLHDLNLAALYADRILLLHEGKLVAQGSPADVLQAETLAHWYRADLSVGSHPDYAIPQVYLRQ.

The region spanning Leu10–Asp247 is the ABC transporter domain. Gly42–Ser49 contributes to the ATP binding site.

It belongs to the ABC transporter superfamily. Heme (hemin) importer (TC 3.A.1.14.5) family. The complex is composed of two ATP-binding proteins (HmuV), two transmembrane proteins (HmuU) and a solute-binding protein (HmuT).

It localises to the cell inner membrane. Its function is as follows. Part of the ABC transporter complex HmuTUV involved in hemin import. Responsible for energy coupling to the transport system. The polypeptide is Hemin import ATP-binding protein HmuV (Pectobacterium atrosepticum (strain SCRI 1043 / ATCC BAA-672) (Erwinia carotovora subsp. atroseptica)).